The sequence spans 342 residues: Uroporphyrinogen decarboxylase (342 aa).

Substrate-binding positions include 24-28 (RQAGR), D74, Y149, S204, and H319.

Belongs to the uroporphyrinogen decarboxylase family. In terms of assembly, homodimer.

The protein localises to the cytoplasm. It carries out the reaction uroporphyrinogen III + 4 H(+) = coproporphyrinogen III + 4 CO2. The protein operates within porphyrin-containing compound metabolism; protoporphyrin-IX biosynthesis; coproporphyrinogen-III from 5-aminolevulinate: step 4/4. Functionally, catalyzes the decarboxylation of four acetate groups of uroporphyrinogen-III to yield coproporphyrinogen-III. The sequence is that of Uroporphyrinogen decarboxylase from Chelativorans sp. (strain BNC1).